The chain runs to 166 residues: Putative 4-hydroxy-4-methyl-2-oxoglutarate aldolase 1 (166 aa).

Alanine 2 bears the N-acetylalanine mark. Substrate contacts are provided by residues 81–84 and arginine 103; that span reads GGNP. Aspartate 104 serves as a coordination point for a divalent metal cation.

It belongs to the class II aldolase/RraA-like family. As to quaternary structure, homotrimer. It depends on a divalent metal cation as a cofactor.

The catalysed reaction is 4-hydroxy-4-methyl-2-oxoglutarate = 2 pyruvate. The enzyme catalyses oxaloacetate + H(+) = pyruvate + CO2. Functionally, catalyzes the aldol cleavage of 4-hydroxy-4-methyl-2-oxoglutarate (HMG) into 2 molecules of pyruvate. Also contains a secondary oxaloacetate (OAA) decarboxylase activity due to the common pyruvate enolate transition state formed following C-C bond cleavage in the retro-aldol and decarboxylation reactions. The sequence is that of Putative 4-hydroxy-4-methyl-2-oxoglutarate aldolase 1 from Arabidopsis thaliana (Mouse-ear cress).